A 111-amino-acid chain; its full sequence is Anti-adapter protein IraM (111 aa).

It belongs to the IraM/RssC family.

The protein resides in the cytoplasm. In terms of biological role, inhibits RpoS proteolysis by regulating RssB activity, thereby increasing the stability of the sigma stress factor RpoS during magnesium starvation. This chain is Anti-adapter protein IraM, found in Escherichia coli O127:H6 (strain E2348/69 / EPEC).